A 613-amino-acid chain; its full sequence is MGDYFAWDFANISGSNTSGSLNLNQLNLDNINNGLHNQEDGAGGRNENSERVGSGSPGSVSMQVLSLFSAVNSALATLEKSEEFPSVVKDEQSIFPAVAKASNSLDELAQNIIPAPSPPGFNRKRKTFDEDSSVEMIRRAISDHLDLLNNCCIGIANLNEDSVHKISLTRSGKPSQLVTVSCRHSSVIQKSYGSEKRYLCPPPMVYINGNYSSIFNQSFRTEISIMNDFGQCSQPISEEYTGQGCMIFRSLHISSLVAAKSKNLRLSLDMFSNVNNQLLSHLVTSSISIVSKPSKKGSKLKISNITLRSGSVVSLYNRINSQTVRTKYTSIEAGQFCLRGDRWVPLRINLLLPDENGKLKVCDDVDNPEPIKYGSIVELVDEATGTTSDPLIIRRVEKDHIAEEDGYVNQMHRIVLESAYPISNVRHLKIAEHSSLAYSNNISVRWFLGATSAQNRNASSEAILPIEWEAVGNLSSNEMTRVGDSVCWTIVGISHFDCTMMLPFNQNPVPTVTDYPYIEEPPEYLESSRSLQFKIGGYSVGLQIWLGVHGPLSYSFTAAADTSTMGTVTLGLSQISYDPSCAEQKYPLLFVIPGGIVIIGKCEILLTSSAFGN.

The tract at residues 32–58 (NNGLHNQEDGAGGRNENSERVGSGSPG) is disordered.

This sequence belongs to the Su(H) family.

It localises to the cytoplasm. The protein localises to the nucleus. Functionally, transcription factor that behaves as a negative regulator of adhesion. Recognizes specifically the canonical CSL response element GTGA/GGAA. May also play a cbf12-antagonistic role in the regulation of a number of other important processes such as extracellular material production, colony morphogenesis, ploidy maintenance, or meiosis. The polypeptide is Transcription factor cbf11 (cbf11) (Schizosaccharomyces pombe (strain 972 / ATCC 24843) (Fission yeast)).